We begin with the raw amino-acid sequence, 768 residues long: Disabled homolog 2 (768 aa).

The segment covering 1–16 has biased composition (polar residues); the sequence is MSNEVETSTTNGQPDQ. The tract at residues 1–36 is disordered; it reads MSNEVETSTTNGQPDQQAAPKAPSKKEKKKGSEKTD. Ser-2 bears the N-acetylserine mark. Ser-2 carries the phosphoserine modification. Residues 45–196 form the PID domain; it reads GDGVKYKAKL…KAEENGSEAL (152 aa). Residue Tyr-170 is modified to Phosphotyrosine. Phosphoserine is present on Ser-193. The required for localization to clathrin-coated pits stretch occupies residues 230–447; the sequence is ESRDILLVDL…KPGRGRRTAK (218 aa). A disordered region spans residues 285 to 449; sequence NFFPTPNPDP…GRGRRTAKSS (165 aa). 2 short sequence motifs (DPF) span residues 293–295 and 298–300; these read DPF. Composition is skewed to polar residues over residues 303–317, 325–334, and 367–381; these read PDQS…LTSA, GSLSTPQSKG, and PSSQ…QNGV. Phosphoserine; in mitosis occurs at positions 326 and 328. The residue at position 401 (Ser-401) is a Phosphoserine. The interval 601–731 is sufficient for interaction with GRB2; the sequence is TISTQSFPQP…GVLSGTKSAD (131 aa). The required for interaction with CSK stretch occupies residues 619–627; the sequence is PPQPPPRNG. Residues 649-768 are required for interaction with MYO6; the sequence is KEVKEMFKDF…HRSPFGNPFA (120 aa). Disordered stretches follow at residues 660–682 and 709–768; these read LRQP…SSAF and NKIN…NPFA. The segment at 663–671 is required for interaction with GRB2 and CSK; it reads PPLVPSRKG. The residue at position 673 (Thr-673) is a Phosphothreonine. Ser-675 bears the Phosphoserine mark. The tract at residues 708-724 is sufficient for interaction with SH3KBP1 SH3 domain; it reads LNKINEPPKPAPRQGVL. Residues 724-755 are compositionally biased toward polar residues; it reads LSGTKSADNSLENPFSKGFSSTNPSVVSQPAS. Ser-729 and Ser-761 each carry phosphoserine.

Can interact (via PID domain) with LDLR, APP, APLP1 and APLP2, and weakly with INPP5D (via NPXY motifs); the interaction is impaired by tyrosine phosphorylation of the respective NPXY motifs. Can weakly interact (via PID domain) with LRP1 (via NPXY motif); the interaction is enhanced by tyrosine phosphorylation of the NPXY motif. Interacts with LRP2 (via NPXY motif); the interaction is not affected by tyrosine phosphorylation of the NPXY motif. Interacts with clathrin; in vitro can assemble clathrin triskelia into polyhedral coats. Interacts with AP2A2, ITGB1, ITGB3, ITGB5, PIAS2, DAB2IP, NOSTRIN, FCHO1, DVL3, EPS15, ITSN1 and EPS15L1. Interacts with SH3KBP1 (via SH3 domains). Interacts with GRB2; competes with SOS1 for binding to GRB2 and the interaction is enhanced by EGF and NT-3 stimulation. Interacts with MAP3K7; the interaction is induced by TGF-beta stimulation and may mediate TGF-beta stimulated JNK activation. Interacts with AXIN1 and PPP1CA; the interactions are mutually exclusive. Interacts with the globular tail of MYO6. Interacts (via DPF motifs) with FCHO2; the interaction is direct and required for DAB2-mediated LDLR endocytosis. Interacts with LRP6; the interaction involves LRP6 phosphorylation by CK2 and sequesters LRP6 towards clathrin-mediated endocytosis. Associates with the TGF-beta receptor complex. Interacts with SMAD2 and SMAD3; the interactions are enhanced upon TGF-beta stimulation. Interacts with GRB2; the interaction is enhanced by EGF and NT-3 stimulation. Interacts with SRC; the interaction is enhanced by EGF stimulation. Interacts with GRB2; the interaction is enhanced by EGF and NT-3 stimulation. Interacts (via NPXY motif) with DAB2 (via PID domain). Phosphorylated. Phosphorylation during mitosis is leading to membrane displacement. There is some ambiguity for the mitotic phosphosite Ser-326/328. Prostate.

It localises to the cytoplasm. The protein resides in the cytoplasmic vesicle. Its subcellular location is the clathrin-coated vesicle membrane. It is found in the membrane. The protein localises to the clathrin-coated pit. In terms of biological role, adapter protein that functions as a clathrin-associated sorting protein (CLASP) required for clathrin-mediated endocytosis of selected cargo proteins. Can bind and assemble clathrin, and binds simultaneously to phosphatidylinositol 4,5-bisphosphate (PtdIns(4,5)P2) and cargos containing non-phosphorylated NPXY internalization motifs, such as the LDL receptor, to recruit them to clathrin-coated pits. Can function in clathrin-mediated endocytosis independently of the AP-2 complex. Involved in endocytosis of integrin beta-1; this function seems to redundant with the AP-2 complex and seems to require DAB2 binding to endocytosis accessory EH domain-containing proteins such as EPS15, EPS15L1 and ITSN1. Involved in endocytosis of cystic fibrosis transmembrane conductance regulator/CFTR. Involved in endocytosis of megalin/LRP2 lipoprotein receptor during embryonal development. Required for recycling of the TGF-beta receptor. Involved in CFTR trafficking to the late endosome. Involved in several receptor-mediated signaling pathways. Involved in TGF-beta receptor signaling and facilitates phosphorylation of the signal transducer SMAD2. Mediates TFG-beta-stimulated JNK activation. May inhibit the canoniocal Wnt/beta-catenin signaling pathway by stabilizing the beta-catenin destruction complex through a competing association with axin preventing its dephosphorylation through protein phosphatase 1 (PP1). Sequesters LRP6 towards clathrin-mediated endocytosis, leading to inhibition of Wnt/beta-catenin signaling. May activate non-canonical Wnt signaling. In cell surface growth factor/Ras signaling pathways proposed to inhibit ERK activation by interrupting the binding of GRB2 to SOS1 and to inhibit SRC by preventing its activating phosphorylation at 'Tyr-419'. Proposed to be involved in modulation of androgen receptor (AR) signaling mediated by SRC activation; seems to compete with AR for interaction with SRC. Plays a role in the CSF-1 signal transduction pathway. Plays a role in cellular differentiation. Involved in cell positioning and formation of visceral endoderm (VE) during embryogenesis and proposed to be required in the VE to respond to Nodal signaling coming from the epiblast. Required for the epithelial to mesenchymal transition, a process necessary for proper embryonic development. May be involved in myeloid cell differentiation and can induce macrophage adhesion and spreading. May act as a tumor suppressor. This Rattus norvegicus (Rat) protein is Disabled homolog 2 (Dab2).